Consider the following 391-residue polypeptide: GDSL esterase/lipase 22 (391 aa).

The N-terminal stretch at 1–29 is a signal peptide; it reads MMANNCNLVSVLCVILVLTLFHNPITVAG. Ser-43 acts as the Nucleophile in catalysis. 3 N-linked (GlcNAc...) asparagine glycosylation sites follow: Asn-105, Asn-165, and Asn-288. Catalysis depends on residues Asp-322 and His-325. Positions 372 to 391 are disordered; the sequence is PATVHASDSSSSTSRGYEYY.

It belongs to the 'GDSL' lipolytic enzyme family. In terms of assembly, component of the PYK10 complex, at least composed of PYK10/BGLU23, BGLU21, BGLU22, JAL22, JAL23, PBP1/JAL30, PBP2/JAL31, JAL32, JAL33, JAL34, JAL35, GLL22 and GLL23.

It is found in the secreted. In Arabidopsis thaliana (Mouse-ear cress), this protein is GDSL esterase/lipase 22 (GLL22).